The following is a 686-amino-acid chain: Methionine--tRNA ligase (686 aa).

Residues proline 22–histidine 32 carry the 'HIGH' region motif. Positions 153, 156, 166, and 169 each coordinate Zn(2+). Positions lysine 337–serine 341 match the 'KMSKS' region motif. Lysine 340 lines the ATP pocket. Positions methionine 547–alanine 573 are disordered. The tRNA-binding domain occupies aspartate 584–arginine 686.

Belongs to the class-I aminoacyl-tRNA synthetase family. MetG type 1 subfamily. Homodimer. It depends on Zn(2+) as a cofactor.

Its subcellular location is the cytoplasm. The catalysed reaction is tRNA(Met) + L-methionine + ATP = L-methionyl-tRNA(Met) + AMP + diphosphate. Functionally, is required not only for elongation of protein synthesis but also for the initiation of all mRNA translation through initiator tRNA(fMet) aminoacylation. In Alcanivorax borkumensis (strain ATCC 700651 / DSM 11573 / NCIMB 13689 / SK2), this protein is Methionine--tRNA ligase.